A 146-amino-acid polypeptide reads, in one-letter code: UPF0178 protein Lin1493 (146 aa).

Belongs to the UPF0178 family.

The polypeptide is UPF0178 protein Lin1493 (Listeria innocua serovar 6a (strain ATCC BAA-680 / CLIP 11262)).